The primary structure comprises 60 residues: Large ribosomal subunit protein bL32 (60 aa).

It belongs to the bacterial ribosomal protein bL32 family.

This is Large ribosomal subunit protein bL32 from Streptococcus sanguinis (strain SK36).